The sequence spans 77 residues: Large ribosomal subunit protein bL28 (77 aa).

Residues 1–20 (MSRVCQVTGKGPVTGNNISH) are disordered.

It belongs to the bacterial ribosomal protein bL28 family.

In Pseudomonas fluorescens (strain SBW25), this protein is Large ribosomal subunit protein bL28.